Consider the following 470-residue polypeptide: Ribulose bisphosphate carboxylase large chain (470 aa).

Residues Asn-115 and Thr-165 each coordinate substrate. Lys-167 functions as the Proton acceptor in the catalytic mechanism. Lys-169 serves as a coordination point for substrate. 3 residues coordinate Mg(2+): Lys-193, Asp-195, and Glu-196. Lys-193 carries the post-translational modification N6-carboxylysine. The active-site Proton acceptor is His-286. Residues Arg-287, His-319, and Ser-371 each contribute to the substrate site.

The protein belongs to the RuBisCO large chain family. Type I subfamily. Heterohexadecamer of 8 large chains and 8 small chains. Forms a CsoS2-CsoS1-RuBisCO complex. Mg(2+) is required as a cofactor.

The protein resides in the carboxysome. It catalyses the reaction 2 (2R)-3-phosphoglycerate + 2 H(+) = D-ribulose 1,5-bisphosphate + CO2 + H2O. The enzyme catalyses D-ribulose 1,5-bisphosphate + O2 = 2-phosphoglycolate + (2R)-3-phosphoglycerate + 2 H(+). Functionally, ruBisCO catalyzes two reactions: the carboxylation of D-ribulose 1,5-bisphosphate, the primary event in carbon dioxide fixation, as well as the oxidative fragmentation of the pentose substrate in the photorespiration process. Both reactions occur simultaneously and in competition at the same active site. This chain is Ribulose bisphosphate carboxylase large chain, found in Prochlorococcus marinus (strain MIT 9313).